We begin with the raw amino-acid sequence, 265 residues long: Mlc titration factor A (265 aa).

Zn(2+) contacts are provided by histidine 111, histidine 148, histidine 152, and glutamate 211.

It belongs to the MtfA family. As to quaternary structure, interacts with Mlc. The cofactor is Zn(2+).

Its subcellular location is the cytoplasm. Its function is as follows. Involved in the modulation of the activity of the glucose-phosphotransferase system (glucose-PTS). Interacts with the transcriptional repressor Mlc, preventing its interaction with DNA and leading to the modulation of expression of genes regulated by Mlc, including ptsG, which encodes the PTS system glucose-specific EIICB component. Shows zinc-dependent metallopeptidase activity. The chain is Mlc titration factor A from Escherichia fergusonii.